A 331-amino-acid chain; its full sequence is Putative NAD(P)H nitroreductase acg (331 aa).

Residues 28–32 (QPWRW) and R316 each bind FMN.

This sequence belongs to the nitroreductase family. FMN is required as a cofactor.

The protein is Putative NAD(P)H nitroreductase acg (acg) of Mycobacterium tuberculosis (strain CDC 1551 / Oshkosh).